Reading from the N-terminus, the 236-residue chain is uncharacterized protein (236 aa).

This is an uncharacterized protein from Schizosaccharomyces pombe (strain 972 / ATCC 24843) (Fission yeast).